The following is a 116-amino-acid chain: Nascent polypeptide-associated complex protein (116 aa).

In terms of domain architecture, NAC-A/B spans 6–70 (PKQMKDLERM…AREESKQQQK (65 aa)).

The protein belongs to the NAC-alpha family. Homodimer. Interacts with the ribosome. Binds ribosomal RNA.

Contacts the emerging nascent chain on the ribosome. This is Nascent polypeptide-associated complex protein from Sulfolobus acidocaldarius (strain ATCC 33909 / DSM 639 / JCM 8929 / NBRC 15157 / NCIMB 11770).